Here is a 568-residue protein sequence, read N- to C-terminus: MRLALWMYQGTAHHGVGRIANSMRGVHAVFHAPQGDDYVNPIFTMLERTPDFPRMTTSIVSGRDLAQGTVRLPETLRAVDAQVHPDLIIVCASCSTILLQEDLERMARSAGTSAEVLVYDANPYRMQEVRSADGLLTTLVQRFARPQAPLPTPSVNILGPASLGFHNRSDLICLRRMLATLGVQINVVAPLGASIHDLERLPAAWATIAPYRELGQNAARWLEDQFGIPALTDAPIGVQPTLRWLRRLVETLNEAGARLQRLSTPLRLPPLTAFSLDGMSAPSSVPWFARTADMESYSMKRAFVFGDATHTVGMVKFLRDELGMQIAGAGTYLEEEAEWVYQELKEYLPPDDSGSPKSSFLATDVFQHVARRIADLSPELVCGTQMERHACRKLDIPCLVIAPPTHIENHLLSYRPVLGFDGADVLADAVYTTATLGMEKHLIDMFGDAGLDYDEPQTGEPRTENQELRVENRASANGHPEAGVSVGAAEPSAAPSRSVVTEESNRATTPSSSTVHPVWTPDAQAMLKKIPFFVRGRVQKNVERYAMQHGYATITAEVLVEAREALGG.

Asp-36 contributes to the [4Fe-4S] cluster binding site. The Proton donor role is filled by Asp-293. 437–438 (GM) provides a ligand contact to substrate. The tract at residues 476-517 (ANGHPEAGVSVGAAEPSAAPSRSVVTEESNRATTPSSSTVHP) is disordered. Residues 498-515 (SVVTEESNRATTPSSSTV) are compositionally biased toward polar residues.

It belongs to the ChlB/BchB/BchZ family. As to quaternary structure, protochlorophyllide reductase is composed of three subunits; BchL, BchN and BchB. Forms a heterotetramer of two BchB and two BchN subunits. It depends on [4Fe-4S] cluster as a cofactor.

It catalyses the reaction chlorophyllide a + oxidized 2[4Fe-4S]-[ferredoxin] + 2 ADP + 2 phosphate = protochlorophyllide a + reduced 2[4Fe-4S]-[ferredoxin] + 2 ATP + 2 H2O. Its pathway is porphyrin-containing compound metabolism; bacteriochlorophyll biosynthesis (light-independent). In terms of biological role, component of the dark-operative protochlorophyllide reductase (DPOR) that uses Mg-ATP and reduced ferredoxin to reduce ring D of protochlorophyllide (Pchlide) to form chlorophyllide a (Chlide). This reaction is light-independent. The NB-protein (BchN-BchB) is the catalytic component of the complex. The protein is Light-independent protochlorophyllide reductase subunit B of Roseiflexus sp. (strain RS-1).